The sequence spans 849 residues: MSLFKARDWWSASLGEKEEFDQGCLCVADVDNSGTAHDKIIVGSFSGYLRIFSPHPLKPGDGMQAEDLLLEVQLRDPVLQVEVGKFVSGTEILHLAVLHPRKLCVYSVSGTLGNVEHGNQYQMKLMYEHNLQRTACSMTHGPFGGVKGRDLICIQSMDGMLMFFEQESYAFGRYLPGFLLPGPLSYSPKTDSFVTVSSSRQVESYKYQVLAVATDADSRKENEQQKMGAGKKVVADWILNIGEQALDISIVSFNQTSFSIFVLGERNFFCLKESGQIRFMKKLDYSPSCFHPYSSVNDGTINTLVGNHNNMLLVYQDVTLKWAAQLSQTPVAVKVANFRDLKGVIVTLSESGQLQCSYLGTDPSLFQVPKVESRDINYEDLDVEMKELQRIIKEATKTQDILPKMEKDDDLTLVATVLPDLDSVSQAVDGEVESEVIPSVSVKLCVRSRLTLQKAVLLISTPAPLALTQDQFIFDSLEPGVSKTASASVFLKGNYPPADLEGSAVVSYSKPTELNPEGVPRIVQCKFRLPLKLVCFPVQPSKVANHKLTIDTNKPPVNLINLFPEFIDQVEEDQVSVVGFQLLAGQKVTLLASKTSQRYRIQSEQFEDLWLITREFILRFQDYFLKQGIKDFTCSFSGPVPLQEYFELIDQHFELRLNGEKYEALLSERAVQFRAIQRLLLTRFKDKTPTPLQNLDTLLDGTYRQVIGIADAAEELQRNLFRAFTRLKSATQLVILLIGLWQKLNKEQIAILEGTFLPLLKDGQELGWEESVDAALSHLLRTCLSKSSKEQALNLTSHLSIPKDTSRLKKHITLLCERMSKGGRLSLSADSGSQQAAEMQGTPINPSVS.

Residues 1-407 form a seven-bladed beta-propeller region; sequence MSLFKARDWW…TQDILPKMEK (407 aa). The tract at residues 825-849 is disordered; the sequence is LSLSADSGSQQAAEMQGTPINPSVS. The span at 828–849 shows a compositional bias: polar residues; that stretch reads SADSGSQQAAEMQGTPINPSVS.

Its subcellular location is the cell projection. It localises to the cilium membrane. The protein resides in the cytoplasm. It is found in the cytoskeleton. The protein localises to the microtubule organizing center. Its subcellular location is the centrosome. It localises to the centriolar satellite. In terms of biological role, required for ciliogenesis. This is Protein PTHB1 (bbs9) from Xenopus laevis (African clawed frog).